The primary structure comprises 159 residues: SsrA-binding protein (159 aa).

This sequence belongs to the SmpB family.

The protein resides in the cytoplasm. Required for rescue of stalled ribosomes mediated by trans-translation. Binds to transfer-messenger RNA (tmRNA), required for stable association of tmRNA with ribosomes. tmRNA and SmpB together mimic tRNA shape, replacing the anticodon stem-loop with SmpB. tmRNA is encoded by the ssrA gene; the 2 termini fold to resemble tRNA(Ala) and it encodes a 'tag peptide', a short internal open reading frame. During trans-translation Ala-aminoacylated tmRNA acts like a tRNA, entering the A-site of stalled ribosomes, displacing the stalled mRNA. The ribosome then switches to translate the ORF on the tmRNA; the nascent peptide is terminated with the 'tag peptide' encoded by the tmRNA and targeted for degradation. The ribosome is freed to recommence translation, which seems to be the essential function of trans-translation. The polypeptide is SsrA-binding protein (Bifidobacterium adolescentis (strain ATCC 15703 / DSM 20083 / NCTC 11814 / E194a)).